We begin with the raw amino-acid sequence, 427 residues long: 3-phosphoshikimate 1-carboxyvinyltransferase (427 aa).

Residues Lys22, Ser23, and Arg27 each coordinate 3-phosphoshikimate. Residue Lys22 coordinates phosphoenolpyruvate. The phosphoenolpyruvate site is built by Gly96 and Arg124. Ser169, Ser170, Gln171, Ser197, Asp313, Asn336, and Lys340 together coordinate 3-phosphoshikimate. Gln171 lines the phosphoenolpyruvate pocket. The active-site Proton acceptor is Asp313. Residues Arg344, Arg386, and Lys411 each contribute to the phosphoenolpyruvate site.

Belongs to the EPSP synthase family. Monomer.

The protein localises to the cytoplasm. The catalysed reaction is 3-phosphoshikimate + phosphoenolpyruvate = 5-O-(1-carboxyvinyl)-3-phosphoshikimate + phosphate. Its pathway is metabolic intermediate biosynthesis; chorismate biosynthesis; chorismate from D-erythrose 4-phosphate and phosphoenolpyruvate: step 6/7. In terms of biological role, catalyzes the transfer of the enolpyruvyl moiety of phosphoenolpyruvate (PEP) to the 5-hydroxyl of shikimate-3-phosphate (S3P) to produce enolpyruvyl shikimate-3-phosphate and inorganic phosphate. The protein is 3-phosphoshikimate 1-carboxyvinyltransferase of Shigella dysenteriae.